The chain runs to 72 residues: Small ribosomal subunit protein bS18 (72 aa).

This sequence belongs to the bacterial ribosomal protein bS18 family. In terms of assembly, part of the 30S ribosomal subunit. Forms a tight heterodimer with protein bS6.

In terms of biological role, binds as a heterodimer with protein bS6 to the central domain of the 16S rRNA, where it helps stabilize the platform of the 30S subunit. The chain is Small ribosomal subunit protein bS18 from Francisella philomiragia subsp. philomiragia (strain ATCC 25017 / CCUG 19701 / FSC 153 / O#319-036).